The sequence spans 1210 residues: Inner capsid protein VP3 (1210 aa).

The interval 1 to 28 (MPRTSRNVRATEVATTAIPPSNAATDTT) is disordered. Residues 113–136 (LRCQQCGAKFSSMTQLAEHVRTEH) form a C2H2-type zinc finger. The interval 294 to 319 (PHAGPQVRSVQSQDQQVYSVDSGPDP) is disordered. The segment covering 299-315 (QVRSVQSQDQQVYSVDS) has biased composition (low complexity).

The protein belongs to the turreted BTV-fold inner capsid family. Homodecamer; each decamer is made up of two conformers of VP2, called VP2A and VP2B. 12 homodecamers assemble to form an icosahedral capsid. Interacts with VP6.

The protein localises to the virion. In terms of biological role, inner capsid protein that self-assembles to form an icosahedral capsid with a T=2 symmetry, which consists of 120 copies of VP2, with channels at each of its five-fold vertices. This capsid constitutes the innermost concentric layer of the viral mature particle. In Aquareovirus A (isolate Chum salmon/Japan/CSRV/1981) (AQRV-A), this protein is Inner capsid protein VP3 (S3).